We begin with the raw amino-acid sequence, 490 residues long: Aspartyl/glutamyl-tRNA(Asn/Gln) amidotransferase subunit B (490 aa).

It belongs to the GatB/GatE family. GatB subfamily. In terms of assembly, heterotrimer of A, B and C subunits.

The enzyme catalyses L-glutamyl-tRNA(Gln) + L-glutamine + ATP + H2O = L-glutaminyl-tRNA(Gln) + L-glutamate + ADP + phosphate + H(+). It catalyses the reaction L-aspartyl-tRNA(Asn) + L-glutamine + ATP + H2O = L-asparaginyl-tRNA(Asn) + L-glutamate + ADP + phosphate + 2 H(+). In terms of biological role, allows the formation of correctly charged Asn-tRNA(Asn) or Gln-tRNA(Gln) through the transamidation of misacylated Asp-tRNA(Asn) or Glu-tRNA(Gln) in organisms which lack either or both of asparaginyl-tRNA or glutaminyl-tRNA synthetases. The reaction takes place in the presence of glutamine and ATP through an activated phospho-Asp-tRNA(Asn) or phospho-Glu-tRNA(Gln). This Zymomonas mobilis subsp. mobilis (strain ATCC 31821 / ZM4 / CP4) protein is Aspartyl/glutamyl-tRNA(Asn/Gln) amidotransferase subunit B.